We begin with the raw amino-acid sequence, 652 residues long: Acetyl-coenzyme A synthetase (652 aa).

CoA-binding positions include 189–192 and T311; that span reads RGGK. ATP contacts are provided by residues 387 to 389, 411 to 416, D500, and R515; these read GEP and DTWWQT. S523 is a binding site for CoA. R526 serves as a coordination point for ATP. Mg(2+)-binding residues include V537, H539, and V542. R584 is a CoA binding site. N6-acetyllysine is present on K609.

Belongs to the ATP-dependent AMP-binding enzyme family. The cofactor is Mg(2+). Post-translationally, acetylated. Deacetylation by the SIR2-homolog deacetylase activates the enzyme.

It carries out the reaction acetate + ATP + CoA = acetyl-CoA + AMP + diphosphate. Functionally, catalyzes the conversion of acetate into acetyl-CoA (AcCoA), an essential intermediate at the junction of anabolic and catabolic pathways. AcsA undergoes a two-step reaction. In the first half reaction, AcsA combines acetate with ATP to form acetyl-adenylate (AcAMP) intermediate. In the second half reaction, it can then transfer the acetyl group from AcAMP to the sulfhydryl group of CoA, forming the product AcCoA. This chain is Acetyl-coenzyme A synthetase, found in Rhizobium rhizogenes (Agrobacterium rhizogenes).